Here is a 420-residue protein sequence, read N- to C-terminus: Tyrosine--tRNA ligase (420 aa).

Tyr-36 provides a ligand contact to L-tyrosine. The short motif at 41–50 (PTADSLHIGH) is the 'HIGH' region element. The L-tyrosine site is built by Tyr-170 and Gln-174. The 'KMSKS' region signature appears at 231-235 (KFGKS). Lys-234 contributes to the ATP binding site. One can recognise an S4 RNA-binding domain in the interval 353-420 (TNIVEVLIET…KKKYFMVNYQ (68 aa)).

The protein belongs to the class-I aminoacyl-tRNA synthetase family. TyrS type 1 subfamily. In terms of assembly, homodimer.

The protein resides in the cytoplasm. It carries out the reaction tRNA(Tyr) + L-tyrosine + ATP = L-tyrosyl-tRNA(Tyr) + AMP + diphosphate + H(+). Functionally, catalyzes the attachment of tyrosine to tRNA(Tyr) in a two-step reaction: tyrosine is first activated by ATP to form Tyr-AMP and then transferred to the acceptor end of tRNA(Tyr). This is Tyrosine--tRNA ligase from Staphylococcus aureus (strain COL).